A 161-amino-acid chain; its full sequence is Nucleotide-binding protein H16_A3060 (161 aa).

This sequence belongs to the YajQ family.

Nucleotide-binding protein. This chain is Nucleotide-binding protein H16_A3060, found in Cupriavidus necator (strain ATCC 17699 / DSM 428 / KCTC 22496 / NCIMB 10442 / H16 / Stanier 337) (Ralstonia eutropha).